The chain runs to 407 residues: Protein NIS1 (407 aa).

A compositionally biased stretch (low complexity) spans 41-61; the sequence is SNSNSNSNTNSNTNSNTNSNS. Positions 41–64 are disordered; the sequence is SNSNSNSNTNSNTNSNTNSNSDTK. Phosphoserine is present on residues Ser-260, Ser-264, Ser-300, and Ser-302. The span at 277–302 shows a compositional bias: polar residues; sequence IKQNSTTPTTRSVYNKNVGRSNTSPS. Residues 277–315 are disordered; it reads IKQNSTTPTTRSVYNKNVGRSNTSPSVLYHPKRRGKLNT. Basic residues predominate over residues 306–315; it reads HPKRRGKLNT. The SUMO-binding signature appears at 391 to 398; it reads IIIPDSQD.

As to quaternary structure, interacts with CBF2, GIS1, NAP1, PRM8, REI1, SHS1 and SMT3.

The protein resides in the bud neck. It localises to the cytoplasm. Its subcellular location is the cell cortex. In terms of biological role, may be involved in a mitotic signaling network. Binds sumoylated proteins and may stabilize SUMO chains. The polypeptide is Protein NIS1 (NIS1) (Saccharomyces cerevisiae (strain ATCC 204508 / S288c) (Baker's yeast)).